The sequence spans 292 residues: Cyclin-dependent kinase 5 (292 aa).

Positions 4-286 constitute a Protein kinase domain; the sequence is YEKLEKIGEG…AEEALQHPYF (283 aa). ATP is bound by residues 10 to 18 and Lys-33; that span reads IGEGTYGTV. Position 15 is a phosphotyrosine; by ABL1, EPHA4 and FYN (Tyr-15). At Thr-17 the chain carries Phosphothreonine. Lys-56 bears the N6-acetyllysine mark. The residue at position 72 (Ser-72) is a Phosphoserine. Residue Asp-126 is the Proton acceptor of the active site. Residue Ser-159 is modified to Phosphoserine.

It belongs to the protein kinase superfamily. CMGC Ser/Thr protein kinase family. CDC2/CDKX subfamily. Heterodimer composed of a catalytic subunit CDK5 and a regulatory subunit CDK5R1 (p25) and macromolecular complex composed of at least CDK5, CDK5R1 (p35) and CDK5RAP1 or CDK5RAP2 or CDK5RAP3. Only the heterodimer shows kinase activity. Under neurotoxic stress and neuronal injury conditions, p35 is cleaved by calpain to generate p25 that hyperactivates CDK5, that becomes functionally disabled and often toxic. Found in a trimolecular complex with CABLES1 and ABL1. Interacts with CABLES1 and CABLES2. Interacts with AATK and GSTP1. Binds to HDAC1 when in complex with p25. Interaction with myristoylation p35 promotes CDK5 association with membranes. Both isoforms 1 and 2 interacts with beta-catenin/CTNNB1. Interacts with delta-catenin/CTNND2 and APEX1. Interacts with P53/TP53 in neurons. Interacts with EPHA4; may mediate the activation of NGEF by EPHA4. Interacts with PTK2/FAK1. The complex p35/CDK5 interacts with CLOCK. In terms of processing, phosphorylation on Tyr-15 by ABL1 and FYN, and on Ser-159 by casein kinase 1 promotes kinase activity. By contrast, phosphorylation at Thr-14 inhibits activity. Post-translationally, phosphorylation at Ser-159 is essential for maximal catalytic activity.

The protein resides in the nucleus. The protein localises to the cytoplasm. It localises to the cell membrane. It is found in the perikaryon. Its subcellular location is the cell projection. The protein resides in the lamellipodium. The protein localises to the growth cone. It localises to the postsynaptic density. It is found in the synapse. The enzyme catalyses L-seryl-[protein] + ATP = O-phospho-L-seryl-[protein] + ADP + H(+). It catalyses the reaction L-threonyl-[protein] + ATP = O-phospho-L-threonyl-[protein] + ADP + H(+). Inhibited by 2-(1-ethyl-2-hydroxyethylamino)-6-benzylamino-9-isopropylpurine (roscovitine), 1-isopropyl-4-aminobenzyl-6-ether-linked benzimidazoles, resveratrol, AT-7519 and olomoucine. Activated by CDK5R1 (p35) and CDK5R2 (p39) during the development of the nervous system; degradation of CDK5R1 (p35) and CDK5R2 (p39) by proteasome result in down regulation of kinase activity, during this process, CDK5 phosphorylates p35 and induces its ubiquitination and subsequent degradation. Kinase activity is mainly determined by the amount of p35 available and subcellular location; reversible association to plasma membrane inhibits activity. Long-term inactivation as well as CDK5R1 (p25)-mediated hyperactivation of CDK5 triggers cell death. The pro-death activity of hyperactivated CDK5 is suppressed by membrane association of CDK5, via myristoylation of p35. Brain-derived neurotrophic factor, glial-derived neurotrophic factor, nerve growth factor (NGF), retinoic acid, laminin and neuregulin promote activity. Neurotoxicity enhances nuclear activity, thus leading to MEF2 phosphorylation and inhibition prior to apoptosis of cortical neurons. Repression by GSTP1 via p25/p35 translocation prevents neurodegeneration. Proline-directed serine/threonine-protein kinase essential for neuronal cell cycle arrest and differentiation and may be involved in apoptotic cell death in neuronal diseases by triggering abortive cell cycle re-entry. Interacts with D1 and D3-type G1 cyclins. Phosphorylates SRC, NOS3, VIM/vimentin, p35/CDK5R1, MEF2A, SIPA1L1, SH3GLB1, PXN, PAK1, MCAM/MUC18, SEPT5, SYN1, DNM1, AMPH, SYNJ1, CDK16, RAC1, RHOA, CDC42, TONEBP/NFAT5, MAPT/TAU, MAP1B, histone H1, p53/TP53, HDAC1, APEX1, PTK2/FAK1, huntingtin/HTT, ATM, MAP2, NEFH and NEFM. Regulates several neuronal development and physiological processes including neuronal survival, migration and differentiation, axonal and neurite growth, synaptogenesis, oligodendrocyte differentiation, synaptic plasticity and neurotransmission, by phosphorylating key proteins. Negatively regulates the CACNA1B/CAV2.2 -mediated Ca(2+) release probability at hippocampal neuronal soma and synaptic terminals. Activated by interaction with CDK5R1 (p35) and CDK5R2 (p39), especially in postmitotic neurons, and promotes CDK5R1 (p35) expression in an autostimulation loop. Phosphorylates many downstream substrates such as Rho and Ras family small GTPases (e.g. PAK1, RAC1, RHOA, CDC42) or microtubule-binding proteins (e.g. MAPT/TAU, MAP2, MAP1B), and modulates actin dynamics to regulate neurite growth and/or spine morphogenesis. Also phosphorylates exocytosis associated proteins such as MCAM/MUC18, SEPT5, SYN1, and CDK16/PCTAIRE1 as well as endocytosis associated proteins such as DNM1, AMPH and SYNJ1 at synaptic terminals. In the mature central nervous system (CNS), regulates neurotransmitter movements by phosphorylating substrates associated with neurotransmitter release and synapse plasticity; synaptic vesicle exocytosis, vesicles fusion with the presynaptic membrane, and endocytosis. Promotes cell survival by activating anti-apoptotic proteins BCL2 and STAT3, and negatively regulating of JNK3/MAPK10 activity. Phosphorylation of p53/TP53 in response to genotoxic and oxidative stresses enhances its stabilization by preventing ubiquitin ligase-mediated proteasomal degradation, and induces transactivation of p53/TP53 target genes, thus regulating apoptosis. Phosphorylation of p35/CDK5R1 enhances its stabilization by preventing calpain-mediated proteolysis producing p25/CDK5R1 and avoiding ubiquitin ligase-mediated proteasomal degradation. During aberrant cell-cycle activity and DNA damage, p25/CDK5 activity elicits cell-cycle activity and double-strand DNA breaks that precedes neuronal death by deregulating HDAC1. DNA damage triggered phosphorylation of huntingtin/HTT in nuclei of neurons protects neurons against polyglutamine expansion as well as DNA damage mediated toxicity. Phosphorylation of PXN reduces its interaction with PTK2/FAK1 in matrix-cell focal adhesions (MCFA) during oligodendrocytes (OLs) differentiation. Negative regulator of Wnt/beta-catenin signaling pathway. Activator of the GAIT (IFN-gamma-activated inhibitor of translation) pathway, which suppresses expression of a post-transcriptional regulon of proinflammatory genes in myeloid cells; phosphorylates the linker domain of glutamyl-prolyl tRNA synthetase (EPRS) in a IFN-gamma-dependent manner, the initial event in assembly of the GAIT complex. Phosphorylation of SH3GLB1 is required for autophagy induction in starved neurons. Phosphorylation of TONEBP/NFAT5 in response to osmotic stress mediates its rapid nuclear localization. MEF2 is inactivated by phosphorylation in nucleus in response to neurotoxin, thus leading to neuronal apoptosis. APEX1 AP-endodeoxyribonuclease is repressed by phosphorylation, resulting in accumulation of DNA damage and contributing to neuronal death. NOS3 phosphorylation down regulates NOS3-derived nitrite (NO) levels. SRC phosphorylation mediates its ubiquitin-dependent degradation and thus leads to cytoskeletal reorganization. May regulate endothelial cell migration and angiogenesis via the modulation of lamellipodia formation. Involved in dendritic spine morphogenesis by mediating the EFNA1-EPHA4 signaling. The complex p35/CDK5 participates in the regulation of the circadian clock by modulating the function of CLOCK protein: phosphorylates CLOCK at 'Thr-451' and 'Thr-461' and regulates the transcriptional activity of the CLOCK-BMAL1 heterodimer in association with altered stability and subcellular distribution. This is Cyclin-dependent kinase 5 from Bos taurus (Bovine).